Consider the following 386-residue polypeptide: MSGISLGIPDGPPPVLAPRRKTRQLMVGGVGVGSDHPISVQSMTTTKTHDVNATLQQIAQLTASGCDIVRVACPKTVDAEALPAIAAKSPIPVIADIHFQPKYIFSAIDAGCAAVRVNPGNIKEFDGRVKEVAKAAGDAGIPIRIGVNAGSLDKRIMEKYGKATPEALVESALWEASLFEEHGYGDIAISVKHNDPVVMVEAYRQLAAQSDYPLHLGVTEAGPAFQGTIKSSVAFGALLAEGIGDTIRVSLSADPVEEIKVGDQILQSLNLRPRKLEIVSCPSCGRAQVDVYKLADEVTAGLEGMEFPLRVAVMGCVVNGPGEARDADLGVASGNGKGQIFVKGEVIKTVPEDQIVETLIEEAMRIAEEEGLEAVEGQKAEVRVTK.

The [4Fe-4S] cluster site is built by C281, C284, C316, and E323.

The protein belongs to the IspG family. It depends on [4Fe-4S] cluster as a cofactor.

The catalysed reaction is (2E)-4-hydroxy-3-methylbut-2-enyl diphosphate + oxidized [flavodoxin] + H2O + 2 H(+) = 2-C-methyl-D-erythritol 2,4-cyclic diphosphate + reduced [flavodoxin]. The protein operates within isoprenoid biosynthesis; isopentenyl diphosphate biosynthesis via DXP pathway; isopentenyl diphosphate from 1-deoxy-D-xylulose 5-phosphate: step 5/6. Converts 2C-methyl-D-erythritol 2,4-cyclodiphosphate (ME-2,4cPP) into 1-hydroxy-2-methyl-2-(E)-butenyl 4-diphosphate. The chain is 4-hydroxy-3-methylbut-2-en-1-yl diphosphate synthase (flavodoxin) from Corynebacterium jeikeium (strain K411).